Here is a 384-residue protein sequence, read N- to C-terminus: Glycerol 3-phosphate oxidase (384 aa).

An N-terminal signal peptide occupies residues 1–15 (METRDVLIVGGGVIG). Isoleucine 14 contacts FAD. The N-palmitoyl cysteine moiety is linked to residue cysteine 16. Cysteine 16 carries S-diacylglycerol cysteine lipidation. FAD contacts are provided by residues glutamate 33, 42 to 43 (TS), and 47 to 49 (SGV). Positions 47 and 51 each coordinate sn-glycerol 3-phosphate. Catalysis depends on histidine 51, which acts as the Proton acceptor. Valine 177 provides a ligand contact to FAD. Lysine 258 and arginine 320 together coordinate sn-glycerol 3-phosphate. 346–347 (MK) contacts FAD. Serine 348 contributes to the sn-glycerol 3-phosphate binding site. Residue threonine 352 coordinates FAD.

In terms of assembly, monomer. FAD serves as cofactor.

It localises to the cytoplasm. The protein localises to the cell membrane. The catalysed reaction is sn-glycerol 3-phosphate + O2 = dihydroxyacetone phosphate + H2O2. Its pathway is polyol metabolism; glycerol degradation via glycerol kinase pathway; glycerone phosphate from sn-glycerol 3-phosphate (aerobic route): step 1/1. In terms of biological role, catalyzes the oxidation of glycerol 3-phosphate to dihydroxyacetone phosphate (DHAP), with a reduction of O2 to H2O2. The formation of hydrogen peroxide by this enzyme is crucial for cytotoxic effects of M.pneumoniae on host cells. Is involved in the metabolism of glycerol and is essential for glycerol utilization; glycerol is one of the few carbon sources that can be utilized by M.pneumoniae for growth. To a lesser extent, is also able to use glyceraldehyde 3-phosphate (GAP), an intermediate in the glycolysis pathway, as a substrate (but the structure of the product has not been elucidated). Therefore, in the absence of glycerol, GAP may serve as a substrate in the GlpO reaction to supply H2O2 during mycoplasma infection. Does not show any dehydrogenase activity with NAD(+). This is Glycerol 3-phosphate oxidase from Mycoplasma pneumoniae (strain ATCC 29342 / M129 / Subtype 1) (Mycoplasmoides pneumoniae).